Consider the following 1228-residue polypeptide: Multimerin-1 (1228 aa).

The first 19 residues, 1–19, serve as a signal peptide directing secretion; it reads MKGARLFVLLSSLWSGGIG. Asparagine 21 is a glycosylation site (N-linked (GlcNAc...) asparagine). Residues 68–98 form a disordered region; the sequence is TPEARTSEDSLLKSTLPPSETSAPAEGVRNQ. Over residues 79 to 89 the composition is skewed to polar residues; that stretch reads LKSTLPPSETS. Asparagine 97, asparagine 114, and asparagine 120 each carry an N-linked (GlcNAc...) asparagine glycan. Asparagine 136 is a glycosylation site (N-linked (GlcNAc...) (complex) asparagine). The interval 157–200 is disordered; it reads NTVGGTGGIGGVGGTGGVGNRAPRETYLSRGDSSSSQRTDYQKS. Positions 160–175 are enriched in gly residues; sequence GGTGGIGGVGGTGGVG. The Cell attachment site signature appears at 186–188; it reads RGD. A compositionally biased stretch (polar residues) spans 187–200; that stretch reads GDSSSSQRTDYQKS. An EMI domain is found at 207–282; it reads GKNWCAYVHT…PGYSGPKCQL (76 aa). 3 disulfides stabilise this stretch: cysteine 211-cysteine 272, cysteine 238-cysteine 245, and cysteine 271-cysteine 280. Threonine 216 carries an O-linked (Fuc) threonine glycan. Threonine 265 carries an O-linked (Fuc) threonine glycan. Coiled coils occupy residues 333-365 and 400-430; these read MKLTLLQKKIDNISLTVNDVRNTYSSLEGKVSE and NDMQETVAQLFKTVSSLSEDLESTRQIIQKV. Asparagine 344 carries an N-linked (GlcNAc...) asparagine glycan. 16 N-linked (GlcNAc...) asparagine glycosylation sites follow: asparagine 431, asparagine 507, asparagine 541, asparagine 576, asparagine 618, asparagine 680, asparagine 729, asparagine 783, asparagine 816, asparagine 828, asparagine 840, asparagine 921, asparagine 933, asparagine 942, asparagine 981, and asparagine 1020. Residues 503-523 adopt a coiled-coil conformation; that stretch reads YESLNKTLSKLKEVHEQLLST. Coiled coils occupy residues 580–650 and 675–726; these read SLEM…EILQ and RKKI…EMED. Residues 819–869 adopt a coiled-coil conformation; that stretch reads NFQKMYQMFNETTSQVRKYQQNMSHLEEKLLLTTKISKNFETRLQDIESKV. The 37-residue stretch at 1041–1077 folds into the EGF-like domain; it reads EYSSCSRHPCQNGGTCINGRTSFTCACRHPFTGDNCT. 3 cysteine pairs are disulfide-bonded: cysteine 1045–cysteine 1056, cysteine 1050–cysteine 1065, and cysteine 1067–cysteine 1076. An O-linked (Fuc) threonine glycan is attached at threonine 1055. N-linked (GlcNAc...) asparagine glycosylation is present at asparagine 1075. The 133-residue stretch at 1096–1228 folds into the C1q domain; it reads RYAPMVAFFA…TFSGYLLYRT (133 aa).

Multimeric. Composed of varying sized, disulfide-linked multimers, the smallest of which is a homotrimer. Proteolysis of the promultimerin in the N-terminal region, leads to the mature p155 form that is stored in platelets. Interacts with factor V/Va. In terms of processing, the N-terminus is blocked. Post-translationally, extensively N-glycosylated. O-fucosylated within the EMI domain (at Thr-216 and Thr-265) by FUT10/POFUT3 and FUT11/POFUT4. O-fucosylation at Thr-216 and Thr-1055 are required for facilitating protein folding and secretion. Synthesized by endothelial cells and megakaryocytes. Stored in platelet alpha granules and endothelial cell Weibel-Palade bodies, following activation of these cells, it is released and attached to megakaryocytes, platelets, endothelium and subendothelium of blood vessels. Not found in plasma. Found in vascular tissues such as placenta, lung, and liver.

It is found in the secreted. In terms of biological role, carrier protein for platelet (but not plasma) factor V/Va. Plays a role in the storage and stabilization of factor V in platelets. Upon release following platelet activation, may limit platelet and plasma factor Va-dependent thrombin generation. Ligand for integrin alpha-IIb/beta-3 and integrin alpha-V/beta-3 on activated platelets, and may function as an extracellular matrix or adhesive protein. This chain is Multimerin-1 (MMRN1), found in Homo sapiens (Human).